Consider the following 1801-residue polypeptide: U3 small nucleolar RNA-associated protein 10 (1801 aa).

One copy of the HEAT 1 repeat lies at 582-619; it reads IDFQALVPFVLVALGDVSERIRREAAAVLAALGALYKK. 2 consecutive transmembrane segments (helical) span residues 945 to 965 and 1001 to 1021; these read IQSGMSYLLSLALGSLLAIVN and ALLLVAGLSVIAPELVLHSVM. 4 HEAT repeats span residues 1045 to 1082, 1252 to 1289, 1296 to 1334, and 1757 to 1794; these read QTIDQVVPALIQSLRNQKRDVVSGTSELLLSFTAAFEH, LSLIDFLDTIEILLQRPGDELRRKVLRLLEGRLRQNPE, NRMLDFLPTLVTIVESSPDILLKHAAVACIDRITEKYGK, and ALLPEMLPYISELMEDEDENVEREVRRWVKQIEDVLGE.

The protein belongs to the HEATR1/UTP10 family. Component of the ribosomal small subunit (SSU) processome.

It localises to the nucleus. Its subcellular location is the nucleolus. The protein resides in the membrane. Involved in nucleolar processing of pre-18S ribosomal RNA. Involved in ribosome biosynthesis. This Aspergillus terreus (strain NIH 2624 / FGSC A1156) protein is U3 small nucleolar RNA-associated protein 10.